The sequence spans 862 residues: Protein PRQFV-amide (862 aa).

A signal peptide spans 1–20; it reads MSSQLLICSVFVLFTFGPNS. Residues 21–79 constitute a propeptide that is removed on maturation; sequence FPSCLAQEQAGNSDATQLSADAKAPESAKDKSGDVQNDGTKSVRSKRDLEIDFGSGDVQ. The tract at residues 32 to 68 is disordered; the sequence is NSDATQLSADAKAPESAKDKSGDVQNDGTKSVRSKRD. Residues 43 to 53 show a composition bias toward basic and acidic residues; that stretch reads KAPESAKDKSG. At Val86 the chain carries Valine amide. A propeptide spanning residues 90–149 is cleaved from the precursor; sequence AAPPVFQTPLVQDKISGFIPSETESPVIGEFAFPGSVFMDDEEALGAEEEPMDDEDLEFY. Val156 carries the valine amide modification. The propeptide occupies 160–175; it reads GIDDYLLQEKLKDFIE. Valine amide is present on residues Val182, Val190, Val198, Val206, Val214, Val222, Val230, Val238, and Val246. The propeptide occupies 250 to 259; sequence EADPSFLFED. Val266 is modified (valine amide). The propeptide occupies 270 to 300; sequence SLDFLGGANWYNPYDVTMEPQSEGSDLQGFS. Val307 carries the valine amide modification. Positions 311-319 are excised as a propeptide; it reads DAFDMFEFS. Val326 bears the Valine amide mark. A propeptide spanning residues 330–338 is cleaved from the precursor; it reads DQDEMFDFS. Val345 is subject to Valine amide. The propeptide occupies 349-357; the sequence is DLQEFFDLS. Residue Val364 is modified to Valine amide. Residues 368–376 constitute a propeptide that is removed on maturation; sequence EFDDEIDFS. Val383 bears the Valine amide mark. Residues 387-395 constitute a propeptide that is removed on maturation; sequence ENDDDFDLS. Val402 carries the valine amide modification. The propeptide occupies 406–414; sequence ENDDEFDLS. Val421 bears the Valine amide mark. Basic and acidic residues predominate over residues 424–434; that stretch reads RENDDELEFSK. The interval 424 to 528 is disordered; sequence RENDDELEFS…NNDDLDFSKR (105 aa). Positions 425 to 433 are excised as a propeptide; sequence ENDDELEFS. Val440 is subject to Valine amide. The segment covering 441–452 has biased composition (basic and acidic residues); that stretch reads GKREDDEIDFSK. The propeptide occupies 444 to 451; sequence EDDEIDFS. Val458 bears the Valine amide mark. Over residues 459 to 471 the composition is skewed to basic and acidic residues; it reads GKRENDGEIDFSK. A propeptide spanning residues 462–470 is cleaved from the precursor; that stretch reads ENDGEIDFS. Position 477 is a valine amide (Val477). Residues 478 to 490 show a composition bias toward basic and acidic residues; the sequence is GKRENDDEIDFSK. A propeptide spanning residues 481–489 is cleaved from the precursor; the sequence is ENDDEIDFS. Residue Val496 is modified to Valine amide. Residues 497 to 508 are compositionally biased toward basic and acidic residues; the sequence is GKREDGEIDFSK. Residues 500-507 constitute a propeptide that is removed on maturation; sequence EDGEIDFS. Val514 is modified (valine amide). Basic and acidic residues predominate over residues 515–527; it reads GKRENNDDLDFSK. Positions 518 to 526 are excised as a propeptide; that stretch reads ENNDDLDFS. At Val533 the chain carries Valine amide. A propeptide spanning residues 537 to 545 is cleaved from the precursor; sequence EVDDEIDFS. Residues 549–634 form a disordered region; it reads RQFVGKREND…RQFVGKREND (86 aa). Residue Val552 is modified to Valine amide. Positions 553 to 565 are enriched in basic and acidic residues; it reads GKRENDDDLDFSK. Residues 556-564 constitute a propeptide that is removed on maturation; the sequence is ENDDDLDFS. Val571 bears the Valine amide mark. Positions 572–584 are enriched in basic and acidic residues; it reads GKRENDDDLEFSK. A propeptide spanning residues 575-583 is cleaved from the precursor; the sequence is ENDDDLEFS. Val590 is subject to Valine amide. Residues 594–602 constitute a propeptide that is removed on maturation; the sequence is ENDPLLDFS. Valine amide is present on Val609. The segment covering 610 to 622 has biased composition (basic and acidic residues); that stretch reads GKRENDDDLDFSK. A propeptide spanning residues 613–621 is cleaved from the precursor; that stretch reads ENDDDLDFS. Valine amide is present on Val628. Residues 632-640 constitute a propeptide that is removed on maturation; that stretch reads ENDPLIDFS. Val647 carries the post-translational modification Valine amide. The propeptide occupies 651-659; that stretch reads ESDGDFELS. Val666 carries the post-translational modification Valine amide. Residues 670 to 677 constitute a propeptide that is removed on maturation; that stretch reads DVDGPGLS. Val684 carries the valine amide modification. The propeptide occupies 688-695; that stretch reads EDYDIDFA. Residue Val702 is modified to Valine amide. Positions 706 to 714 are excised as a propeptide; that stretch reads GNEDEFEMS. Position 721 is a valine amide (Val721). A propeptide spanning residues 724–757 is cleaved from the precursor; it reads RNFEELDQDFLRHMHDILDKRIPQFVSLPSLTAA. A Valine amide modification is found at Val764. The propeptide occupies 768–812; that stretch reads SDAAFLETLRHLRDYVGGQDEQNVSEFSYQHPYPSDLNDVGLIQQ. Val819 bears the Valine amide mark. Residues 823-862 constitute a propeptide that is removed on maturation; that stretch reads GGDVDDINTTYRLGDFVSQPMSFVEEPSWLCRQLNAFGIS.

Expressed abundantly in the abdominal ganglion, much less in the pedal and cerebral ganglia, and rarely in the buccal and pleural ganglia.

The protein localises to the secreted. PRQFV-amide may act as a modulator within the feeding system as well as in other systems of Aplysia. The protein is Protein PRQFV-amide of Aplysia californica (California sea hare).